The sequence spans 444 residues: MRLTRTRLCSLLVALYCLFSIYAAYHVFFGRRRRPLGTTSRNSRKAAAAQAKERRGREQSALESEEWNPWEGDEKNEQRHRVKTNLQILNKSTKEKIEHRVQIWGKAAIGLYLWEHIFEGTLDPADVTAQWREGQSVVGRTHYSFITGPAVVPGYFSIDVDNVVLVLNGREKAKIFHATQWLIYAQNLMKTQKLQHLAVVLLGNEHCENDWIMQFLKRNGGFVDLLFITYDSPWINGADILQWPLGVATYRQFPVVEASWTMLHDERPYICNFLGTAYENSSRQALMNILKQDGNDKLCWVSAREQWQPQETNESLKNYQDALLHSDLTLCPVGVNTECYRIYEACSFGSIPVVEDVMTAGHCGNTTSQHSAPLQLLKAMGAPFIFIKNWKELPAILEKEKTISLQEKIQRRKVLLHWYQHFKTELKWKFTKILESSFFINNKV.

Over 1 to 9 (MRLTRTRLC) the chain is Cytoplasmic. Residues 10–30 (SLLVALYCLFSIYAAYHVFFG) form a helical; Signal-anchor for type II membrane protein membrane-spanning segment. The Extracellular segment spans residues 31–444 (RRRRPLGTTS…ESSFFINNKV (414 aa)). Positions 38–79 (TTSRNSRKAAAAQAKERRGREQSALESEEWNPWEGDEKNEQR) are disordered. Over residues 51–60 (AKERRGREQS) the composition is skewed to basic and acidic residues.

It belongs to the RXYLT1 family. Forms a complex composed of FKTN/fukutin, FKRP and RXYLT1/TMEM5.

The protein localises to the golgi apparatus membrane. It catalyses the reaction 3-O-[Rib-ol-P-Rib-ol-P-3-beta-D-GalNAc-(1-&gt;3)-beta-D-GlcNAc-(1-&gt;4)-(O-6-P-alpha-D-Man)]-Thr-[protein] + UDP-alpha-D-xylose = 3-O-[beta-D-Xyl-(1-&gt;4)-Rib-ol-P-Rib-ol-P-3-beta-D-GalNAc-(1-&gt;3)-beta-D-GlcNAc-(1-&gt;4)-(O-6-P-alpha-D-Man)]-Thr-[protein] + UDP + H(+). It participates in protein modification; protein glycosylation. Acts as a UDP-D-xylose:ribitol-5-phosphate beta1,4-xylosyltransferase, which catalyzes the transfer of UDP-D-xylose to ribitol 5-phosphate (Rbo5P) to form the Xylbeta1-4Rbo5P linkage on O-mannosyl glycan. Participates in the biosynthesis of the phosphorylated O-mannosyl trisaccharide (N-acetylgalactosamine-beta-3-N-acetylglucosamine-beta-4-(phosphate-6-)mannose), a carbohydrate structure present in alpha-dystroglycan (DAG1), which is required for binding laminin G-like domain-containing extracellular proteins with high affinity. In Mus musculus (Mouse), this protein is Ribitol-5-phosphate xylosyltransferase 1.